Here is a 257-residue protein sequence, read N- to C-terminus: Acetylglutamate kinase (257 aa).

Substrate contacts are provided by residues 43 to 44 (GG), Arg-65, and Asn-157. ATP is bound by residues 180 to 185 (DVSGIL) and 208 to 210 (IIT).

Belongs to the acetylglutamate kinase family. ArgB subfamily. In terms of assembly, homodimer.

The protein resides in the cytoplasm. The enzyme catalyses N-acetyl-L-glutamate + ATP = N-acetyl-L-glutamyl 5-phosphate + ADP. Its pathway is amino-acid biosynthesis; L-arginine biosynthesis; N(2)-acetyl-L-ornithine from L-glutamate: step 2/4. Catalyzes the ATP-dependent phosphorylation of N-acetyl-L-glutamate. The chain is Acetylglutamate kinase from Pectobacterium atrosepticum (strain SCRI 1043 / ATCC BAA-672) (Erwinia carotovora subsp. atroseptica).